The chain runs to 155 residues: Interleukin-36 receptor antagonist protein (155 aa).

Cys8 and Cys154 are disulfide-bonded.

It belongs to the IL-1 family. As to quaternary structure, interacts with cargo receptor TMED10; the interaction mediates the translocation from the cytoplasm into the ERGIC (endoplasmic reticulum-Golgi intermediate compartment) and thereby secretion. Predominantly expressed in skin keratinocytes but not in fibroblasts, endothelial cells or melanocytes. Detected also in the spleen, brain leukocyte and macrophage cell types. Increased in lesional psoriasis skin.

The protein localises to the cytoplasm. Its subcellular location is the secreted. Functionally, inhibits the activity of interleukin-36 (IL36A,IL36B and IL36G) by binding to receptor IL1RL2 and preventing its association with the coreceptor IL1RAP for signaling. Part of the IL-36 signaling system that is thought to be present in epithelial barriers and to take part in local inflammatory response; similar to the IL-1 system with which it shares the coreceptor. Proposed to play a role in skin inflammation. May be involved in the innate immune response to fungal pathogens, such as Aspergillus fumigatus. May activate an anti-inflammatory signaling pathway by recruiting SIGIRR. This Homo sapiens (Human) protein is Interleukin-36 receptor antagonist protein.